Reading from the N-terminus, the 188-residue chain is Apolipoprotein M (188 aa).

A signal peptide (not cleaved) is located at residues 1-22 (MFHQIWAALLYLYGILLNSIYQ). Intrachain disulfides connect Cys23/Cys167, Cys95/Cys183, and Cys128/Cys157. Tetradecanoate-binding residues include Glu136 and Arg143.

Belongs to the calycin superfamily. Lipocalin family. Highly divergent. In terms of assembly, interacts with LRP2; LRP2 mediates APOM renal uptake and subsequent lysosomal degradation.

The protein localises to the secreted. Probably involved in lipid transport. Can bind sphingosine-1-phosphate, myristic acid, palmitic acid and stearic acid, retinol, all-trans-retinoic acid and 9-cis-retinoic acid. This chain is Apolipoprotein M (APOM), found in Sus scrofa (Pig).